The sequence spans 94 residues: MKSFPVAFLVLLIFILSVHRGVTTRGSDVAKFCCFQYSHKILPWKWIQSYKFTRSSCSQQAVIFTTKKGHKVCAQPKEKWVQRYIALLREQQQS.

Residues 1 to 23 (MKSFPVAFLVLLIFILSVHRGVT) form the signal peptide. Cystine bridges form between Cys33/Cys57 and Cys34/Cys73.

This sequence belongs to the intercrine beta (chemokine CC) family. In terms of assembly, monomer.

It is found in the secreted. Its function is as follows. Chemoattractant for eosinophils and basophils. Acts as a ligand for C-C chemokine receptor CCR3 which triggers Ca(2+) mobilization in eosinophils. Also acts as a ligand for CX3C chemokine receptor CX3CR1, inducing cell chemotaxis. This is C-C motif chemokine 26 from Canis lupus familiaris (Dog).